We begin with the raw amino-acid sequence, 585 residues long: Eukaryotic translation initiation factor 3 subunit D (585 aa).

A compositionally biased stretch (basic and acidic residues) spans leucine 43–glycine 60. Disordered stretches follow at residues leucine 43–glutamine 62 and arginine 109–alanine 152. The segment covering arginine 109–alanine 130 has biased composition (gly residues). The segment at serine 300–proline 314 is RNA gate. A disordered region spans residues valine 560 to glutamate 585. Residues phenylalanine 565 to glutamate 585 are compositionally biased toward acidic residues.

The protein belongs to the eIF-3 subunit D family. As to quaternary structure, component of the eukaryotic translation initiation factor 3 (eIF-3) complex.

Its subcellular location is the cytoplasm. MRNA cap-binding component of the eukaryotic translation initiation factor 3 (eIF-3) complex, which is involved in protein synthesis of a specialized repertoire of mRNAs and, together with other initiation factors, stimulates binding of mRNA and methionyl-tRNAi to the 40S ribosome. The eIF-3 complex specifically targets and initiates translation of a subset of mRNAs involved in cell proliferation. In the eIF-3 complex, eif3d specifically recognizes and binds the 7-methylguanosine cap of a subset of mRNAs. This chain is Eukaryotic translation initiation factor 3 subunit D, found in Neosartorya fischeri (strain ATCC 1020 / DSM 3700 / CBS 544.65 / FGSC A1164 / JCM 1740 / NRRL 181 / WB 181) (Aspergillus fischerianus).